A 202-amino-acid chain; its full sequence is Peptide deformylase 2 (202 aa).

Fe cation contacts are provided by Cys-123 and His-165. Glu-166 is a catalytic residue. A Fe cation-binding site is contributed by His-169.

This sequence belongs to the polypeptide deformylase family. Fe(2+) serves as cofactor.

It carries out the reaction N-terminal N-formyl-L-methionyl-[peptide] + H2O = N-terminal L-methionyl-[peptide] + formate. Removes the formyl group from the N-terminal Met of newly synthesized proteins. Requires at least a dipeptide for an efficient rate of reaction. N-terminal L-methionine is a prerequisite for activity but the enzyme has broad specificity at other positions. In Vibrio vulnificus (strain YJ016), this protein is Peptide deformylase 2.